Here is a 714-residue protein sequence, read N- to C-terminus: Calpain-1 catalytic subunit (714 aa).

The Calpain catalytic domain occupies 55–354 (LFRDEAFPPV…FTRLEICNLT (300 aa)). The Ca(2+) site is built by Q109 and D114. Catalysis depends on residues C115, H272, and N296. The Ca(2+) site is built by S316, D318, and E323. T354 carries the phosphothreonine modification. Residues 355 to 526 (PDALKSRTIR…KSAGTAELDD (172 aa)) are domain III. The interval 527–542 (QIQANLPDEQVLSEEE) is linker. 4 consecutive EF-hand domains span residues 541–576 (EEIDENFKALFRQLAGEDMEISVKELRTILNRIISK), 585–618 (FSLESCRSMVNLMDRDGNGKLGLVEFNILWNRIR), 615–650 (NRIRNYLSIFRKFDLDKSGSMSAYEMRMAIESAGFK), and 680–714 (VRLETMFRFFKTLDTDLDGVVTFDLFKWLQLTMFA). Residues 543-713 (IDENFKALFR…LFKWLQLTMF (171 aa)) are domain IV. Ca(2+)-binding residues include D598, D600, N602, K604, E609, D628, D630, S632, S634, and E639.

This sequence belongs to the peptidase C2 family. As to quaternary structure, forms a heterodimer with a small (regulatory) subunit (CAPNS1). Requires Ca(2+) as cofactor. Post-translationally, undergoes calcium-induced successive autoproteolytic cleavages that generate a membrane-bound 78 kDa active form and an intracellular 75 kDa active form. Calpastatin reduces with high efficiency the transition from 78 kDa to 75 kDa calpain forms. As to expression, ubiquitous.

The protein resides in the cytoplasm. It localises to the cell membrane. It catalyses the reaction Broad endopeptidase specificity.. With respect to regulation, activated by micromolar concentrations of calcium and inhibited by calpastatin. Its function is as follows. Calcium-regulated non-lysosomal thiol-protease which catalyze limited proteolysis of substrates involved in cytoskeletal remodeling and signal transduction. Proteolytically cleaves CTBP1. Cleaves and activates caspase-7 (CASP7). This is Calpain-1 catalytic subunit (CAPN1) from Macaca fascicularis (Crab-eating macaque).